Consider the following 235-residue polypeptide: tRNA (cytidine-2'-O-)-methyltransferase TrmJ (235 aa).

S-adenosyl-L-methionine-binding positions include 77-79, glycine 111, isoleucine 131, and 138-140; these read TSS and PVL.

The protein belongs to the class IV-like SAM-binding methyltransferase superfamily. RNA methyltransferase TrmH family. Homodimer.

The protein localises to the cytoplasm. The enzyme catalyses cytidine(32) in tRNA + S-adenosyl-L-methionine = 2'-O-methylcytidine(32) in tRNA + S-adenosyl-L-homocysteine + H(+). Catalyzes the formation of 2'O-methylated cytidine (Cm32) at position 32 in tRNA. Is specific for cytidine. This chain is tRNA (cytidine-2'-O-)-methyltransferase TrmJ, found in Sulfolobus acidocaldarius (strain ATCC 33909 / DSM 639 / JCM 8929 / NBRC 15157 / NCIMB 11770).